The following is a 356-amino-acid chain: Butyrate kinase (356 aa).

The protein belongs to the acetokinase family.

Its subcellular location is the cytoplasm. The catalysed reaction is butanoate + ATP = butanoyl phosphate + ADP. The protein operates within lipid metabolism; butanoate metabolism. In terms of biological role, catalyzes the conversion of butyryl-CoA through butyryl phosphate to butyrate. This Clostridium perfringens (strain ATCC 13124 / DSM 756 / JCM 1290 / NCIMB 6125 / NCTC 8237 / Type A) protein is Butyrate kinase (buk).